Reading from the N-terminus, the 429-residue chain is Light-independent protochlorophyllide reductase subunit N (429 aa).

3 residues coordinate [4Fe-4S] cluster: Cys32, Cys57, and Cys118.

The protein belongs to the BchN/ChlN family. As to quaternary structure, protochlorophyllide reductase is composed of three subunits; BchL, BchN and BchB. Forms a heterotetramer of two BchB and two BchN subunits. It depends on [4Fe-4S] cluster as a cofactor.

The enzyme catalyses chlorophyllide a + oxidized 2[4Fe-4S]-[ferredoxin] + 2 ADP + 2 phosphate = protochlorophyllide a + reduced 2[4Fe-4S]-[ferredoxin] + 2 ATP + 2 H2O. The protein operates within porphyrin-containing compound metabolism; bacteriochlorophyll biosynthesis (light-independent). Its function is as follows. Component of the dark-operative protochlorophyllide reductase (DPOR) that uses Mg-ATP and reduced ferredoxin to reduce ring D of protochlorophyllide (Pchlide) to form chlorophyllide a (Chlide). This reaction is light-independent. The NB-protein (BchN-BchB) is the catalytic component of the complex. The chain is Light-independent protochlorophyllide reductase subunit N from Rhodopseudomonas palustris (strain ATCC BAA-98 / CGA009).